The chain runs to 468 residues: ATP synthase subunit beta (468 aa).

Residue 155 to 162 coordinates ATP; the sequence is GGAGVGKT.

This sequence belongs to the ATPase alpha/beta chains family. As to quaternary structure, F-type ATPases have 2 components, CF(1) - the catalytic core - and CF(0) - the membrane proton channel. CF(1) has five subunits: alpha(3), beta(3), gamma(1), delta(1), epsilon(1). CF(0) has three main subunits: a(1), b(2) and c(9-12). The alpha and beta chains form an alternating ring which encloses part of the gamma chain. CF(1) is attached to CF(0) by a central stalk formed by the gamma and epsilon chains, while a peripheral stalk is formed by the delta and b chains.

The protein resides in the cell inner membrane. The enzyme catalyses ATP + H2O + 4 H(+)(in) = ADP + phosphate + 5 H(+)(out). Functionally, produces ATP from ADP in the presence of a proton gradient across the membrane. The catalytic sites are hosted primarily by the beta subunits. This Leptospira biflexa serovar Patoc (strain Patoc 1 / ATCC 23582 / Paris) protein is ATP synthase subunit beta.